The primary structure comprises 105 residues: MAGIVSLVILAVALFSFMNFDPYVSQVLALKGDADRGRAIFQANCAVCHGIQADGYIGPSLWGVSQRRSQSHIIHQVVSGQTPPMPQFEPNPQEMADLLNYLKTL.

A signal peptide spans 1 to 29; sequence MAGIVSLVILAVALFSFMNFDPYVSQVLA. The heme c site is built by cysteine 45, cysteine 48, histidine 49, and methionine 85.

Binds 1 heme c group covalently per subunit.

In Synechocystis sp. (strain ATCC 27184 / PCC 6803 / Kazusa), this protein is Cytochrome c-553-like (cytM).